Here is an 821-residue protein sequence, read N- to C-terminus: BDNF/NT-3 growth factors receptor (821 aa).

Residues 1–31 form the signal peptide; sequence MSPWLKWHGPAMARLWGLCLLVLGFWRASLA. 2 disulfide bridges follow: cysteine 32/cysteine 38 and cysteine 36/cysteine 45. The LRRNT domain maps to 32–61; sequence CPTSCKCSSARIWCTEPSPGIVAFPRLEPN. Topologically, residues 32 to 429 are extracellular; sequence CPTSCKCSSA…DVADQSNREH (398 aa). 3 N-linked (GlcNAc...) asparagine glycosylation sites follow: asparagine 67, asparagine 95, and asparagine 121. 2 LRR repeats span residues 92–113 and 116–137; these read GLRN…AFLK and NLRH…HFRH. In terms of domain architecture, LRRCT spans 148-196; that stretch reads NPFTCSCDIMWLKTLQETKSSPDTQDLYCLNESSKNMPLANLQIPNCGL. 2 cysteine pairs are disulfide-bonded: cysteine 152/cysteine 176 and cysteine 154/cysteine 194. Residues asparagine 178, asparagine 205, asparagine 241, asparagine 254, asparagine 280, asparagine 325, asparagine 338, asparagine 350, and asparagine 411 are each glycosylated (N-linked (GlcNAc...) asparagine). Ig-like C2-type domains are found at residues 197-282 and 301-365; these read PSAR…VNLT and WCIP…MAKN. A disulfide bridge connects residues cysteine 218 and cysteine 266. Cysteines 302 and 345 form a disulfide. The helical transmembrane segment at 430-453 threads the bilayer; it reads LSVYAVVVIASVVGFCLLVMLLLL. An interaction with MAPK8IP3/JIP3 region spans residues 454-465; the sequence is KLARHSKFGMKG. Residues 454-821 are Cytoplasmic-facing; that stretch reads KLARHSKFGM…ASPVYLDILG (368 aa). The segment at 474-497 is disordered; it reads DDSASPLHHISNGSNTPSSSEGGP. The span at 484-494 shows a compositional bias: polar residues; sequence SNGSNTPSSSE. A Phosphotyrosine modification is found at tyrosine 515. A Protein kinase domain is found at 537–806; sequence IVLKRELGEG…KNIKSIHTLL (270 aa). ATP is bound by residues 543 to 551 and lysine 571; that span reads LGEGAFGKV. Residue aspartate 675 is the Proton acceptor of the active site. Residues tyrosine 701, tyrosine 705, tyrosine 706, and tyrosine 816 each carry the phosphotyrosine; by autocatalysis modification.

It belongs to the protein kinase superfamily. Tyr protein kinase family. Insulin receptor subfamily. As to quaternary structure, exists in a dynamic equilibrium between monomeric (low affinity) and dimeric (high affinity) structures. Interacts (phosphorylated upon activation by BDNF) with SHC1; mediates SHC1 phosphorylation and activation. Interacts (phosphorylated upon activation by BDNF) with PLCG1 and/or PLCG2; mediates PLCG1 phosphorylation and activation. Interacts with SH2B1 and SH2B2. Interacts with NGFR; may regulate the ligand specificity of the receptor. Interacts with SORCS2; this interaction is important for normal targeting to post-synaptic densities in response to high-frequency stimulation. Interacts (phosphorylated upon ligand-binding) with SH2D1A; regulates NTRK2. Interacts with SQSTM1 and KIDINS220. Interacts (phosphorylated upon ligand-binding) with FRS2; activates the MAPK signaling pathway. Interacts with APPL1. Interacts with MAPK8IP3/JIP3 and KLC1; interaction with KLC1 is mediated by MAPK8IP3/JIP3. Interacts with SORL1; this interaction facilitates NTRK2 trafficking between synaptic plasma membranes, postsynaptic densities and cell soma, hence positively regulates BDNF signaling. Interacts with SLITRK2. Phosphorylated. Undergoes ligand-mediated autophosphorylation that is required for interaction with SHC1 and PLCG1 and other downstream effectors. Some isoforms are not phosphorylated. In terms of processing, ubiquitinated. Undergoes polyubiquitination upon activation; regulated by NGFR. Ubiquitination regulates the internalization of the receptor. In terms of tissue distribution, expressed in the brain, in neurons (at protein level). Detected in hippocampus (at protein level). Widely expressed in the central and peripheral nervous system. The different forms are differentially expressed in various cell types. Isoform GP95-TRKB is specifically expressed in glial cells.

It localises to the cell membrane. Its subcellular location is the endosome membrane. It is found in the early endosome membrane. The protein localises to the cell projection. The protein resides in the axon. It localises to the dendrite. Its subcellular location is the cytoplasm. It is found in the perinuclear region. The protein localises to the postsynaptic density. The catalysed reaction is L-tyrosyl-[protein] + ATP = O-phospho-L-tyrosyl-[protein] + ADP + H(+). Its activity is regulated as follows. The formation of active receptors dimers able to fully transduce the ligand-mediated signal, may be negatively regulated by the formation of inactive heterodimers with the non-catalytic isoforms. The neuronal activity and the influx of calcium positively regulate the kinase activity and the internalization of the receptor which are both important for active signaling. Regulated by NGFR that may control the internalization of the receptor. NGFR may also stimulate the activation by BDNF compared to NTF3 and NTF4. SH2D1A inhibits the autophosphorylation of the receptor, and alters the recruitment and activation of downstream effectors and signaling cascades. Receptor tyrosine kinase involved in the development and the maturation of the central and the peripheral nervous systems through regulation of neuron survival, proliferation, migration, differentiation, and synapse formation and plasticity. Receptor for BDNF/brain-derived neurotrophic factor and NTF4/neurotrophin-4. Alternatively can also bind NTF3/neurotrophin-3 which is less efficient in activating the receptor but regulates neuron survival through NTRK2. Upon ligand-binding, undergoes homodimerization, autophosphorylation and activation. Recruits, phosphorylates and/or activates several downstream effectors including SHC1, FRS2, SH2B1, SH2B2 and PLCG1 that regulate distinct overlapping signaling cascades. Through SHC1, FRS2, SH2B1, SH2B2 activates the GRB2-Ras-MAPK cascade that regulates for instance neuronal differentiation including neurite outgrowth. Through the same effectors controls the Ras-PI3 kinase-AKT1 signaling cascade that mainly regulates growth and survival. Through PLCG1 and the downstream protein kinase C-regulated pathways controls synaptic plasticity. Thereby, plays a role in learning and memory by regulating both short term synaptic function and long-term potentiation. PLCG1 also leads to NF-Kappa-B activation and the transcription of genes involved in cell survival. Hence, it is able to suppress anoikis, the apoptosis resulting from loss of cell-matrix interactions. Isoform GP95-TRKB may also play a role in neutrophin-dependent calcium signaling in glial cells and mediate communication between neurons and glia. The protein is BDNF/NT-3 growth factors receptor of Mus musculus (Mouse).